Here is a 461-residue protein sequence, read N- to C-terminus: tRNA-2-methylthio-N(6)-dimethylallyladenosine synthase (461 aa).

Residues 18–134 (KHIYIQTLGC…LPDFISRIEK (117 aa)) form the MTTase N-terminal domain. [4Fe-4S] cluster contacts are provided by C27, C63, C97, C172, C176, and C179. One can recognise a Radical SAM core domain in the interval 158–388 (CNGQVSSFVT…QALQEQHTLE (231 aa)). Residues 391-454 (KAMEGKQEDV…LHSLRGEMLC (64 aa)) enclose the TRAM domain.

This sequence belongs to the methylthiotransferase family. MiaB subfamily. Monomer. It depends on [4Fe-4S] cluster as a cofactor.

It is found in the cytoplasm. It carries out the reaction N(6)-dimethylallyladenosine(37) in tRNA + (sulfur carrier)-SH + AH2 + 2 S-adenosyl-L-methionine = 2-methylsulfanyl-N(6)-dimethylallyladenosine(37) in tRNA + (sulfur carrier)-H + 5'-deoxyadenosine + L-methionine + A + S-adenosyl-L-homocysteine + 2 H(+). Functionally, catalyzes the methylthiolation of N6-(dimethylallyl)adenosine (i(6)A), leading to the formation of 2-methylthio-N6-(dimethylallyl)adenosine (ms(2)i(6)A) at position 37 in tRNAs that read codons beginning with uridine. The protein is tRNA-2-methylthio-N(6)-dimethylallyladenosine synthase of Syntrophus aciditrophicus (strain SB).